Here is a 533-residue protein sequence, read N- to C-terminus: Homeobox protein DTH-1 (533 aa).

Disordered regions lie at residues 1–28 (MSSN…NECP) and 308–378 (LPQN…GKKR). Over residues 8–19 (VKYDTNFDREGY) the composition is skewed to basic and acidic residues. A compositionally biased stretch (low complexity) spans 308 to 317 (LPQNLPNPNQ). Residues 318-333 (TDSIYSSSINENNQPI) are compositionally biased toward polar residues. Residues 360 to 371 (SVENNDNENSSS) show a composition bias toward low complexity. Residues 377-436 (KRKRRVLFSKKQILELERHFRQKKYLSAPEREHLANLIGLSPTQVKIWFQNHRYKMKRAH) constitute a DNA-binding region (homeobox).

Belongs to the NK-2 homeobox family. In terms of tissue distribution, intestine and unidentified peripheral parenchymal cells. Slightly higher levels in the cephalic region compared to other body regions.

It is found in the nucleus. In terms of biological role, this protein might be involved in determination and/or differentiation of nerve cells in the continuous replacement of neurons in the cephalic region. The sequence is that of Homeobox protein DTH-1 (DTH-1) from Girardia tigrina (Planarian).